The primary structure comprises 66 residues: Large ribosomal subunit protein bL33c (66 aa).

This sequence belongs to the bacterial ribosomal protein bL33 family.

The protein resides in the plastid. The protein localises to the chloroplast. The protein is Large ribosomal subunit protein bL33c of Phalaenopsis aphrodite subsp. formosana (Moth orchid).